A 305-amino-acid chain; its full sequence is Putative monooxygenase p33MONOX (305 aa).

The segment at 37-56 is disordered; it reads LEDPAPMTPPPSDMGSVPWK. A Phosphothreonine modification is found at threonine 44. The short motif at 67-77 is the Flavin-containing monooxygenase motif element; sequence LAKVEEGEASL. 2 disordered regions span residues 158-236 and 259-305; these read QSGE…KYDS and QANR…PTGF. The segment covering 169-183 has biased composition (low complexity); sequence PASAQSTPSTTPHSS. Threonine 175 carries the phosphothreonine modification. Phosphoserine is present on residues serine 182 and serine 183. Polar residues predominate over residues 193–210; it reads TSGSSTALPGPNPSTMDS.

The protein belongs to the P33MONOX family. As to quaternary structure, interacts with NELFB, NOL12 and PRNP. As to expression, down-regulated in the occipital lobe of an early stage Alzheimer disease patients.

The protein localises to the cytoplasm. Its function is as follows. Potential NADPH-dependent oxidoreductase. May be involved in the regulation of neuronal survival, differentiation and axonal outgrowth. The sequence is that of Putative monooxygenase p33MONOX (KIAA1191) from Homo sapiens (Human).